Here is a 522-residue protein sequence, read N- to C-terminus: 4-chlorobenzoate--CoA ligase (522 aa).

Residues 161–169 (TSGTTGLPK), 300–305 (DIYGTT), and N410 each bind ATP.

The protein belongs to the ATP-dependent AMP-binding enzyme family. Homodimer. Mg(2+) serves as cofactor.

It carries out the reaction 4-chlorobenzoate + ATP + CoA = 4-chlorobenzoyl-CoA + AMP + diphosphate. The protein operates within xenobiotic degradation; 4-chlorobenzoate degradation; 4-hydroxybenzoate from 4-chlorobenzoate: step 2/3. Catalyzes the formation of chlorobenzoyl-CoA via a 2 step reaction. First 4-chlorobenzoate is adenylated by ATP, followed by acyl transfer from the 4-chlorobenzoyl-AMP intermediate to CoA. Benzoate, 4-bromobenzoate, 4-iodobenzoate and 4-fluorobenzoate also act as substrates. Inactive towards 4-nitrobenzoate. The protein is 4-chlorobenzoate--CoA ligase of Arthrobacter sp.